We begin with the raw amino-acid sequence, 223 residues long: Putative 3-methyladenine DNA glycosylase (223 aa).

Belongs to the DNA glycosylase MPG family.

The polypeptide is Putative 3-methyladenine DNA glycosylase (Rhodococcus jostii (strain RHA1)).